The chain runs to 243 residues: Venom nerve growth factor 1 (243 aa).

A signal peptide spans 1–18 (MSMLCYTLIIAFLIGIWA). A propeptide spanning residues 19-125 (APKSEDNVPL…TLNRNIRAKR (107 aa)) is cleaved from the precursor. The span at 47–66 (GLKTSRNTDQRHPAPKKAED) shows a compositional bias: basic and acidic residues. Residues 47–69 (GLKTSRNTDQRHPAPKKAEDQEL) are disordered. 3 disulfides stabilise this stretch: Cys-139/Cys-204, Cys-182/Cys-232, and Cys-192/Cys-234. Asn-148 is a glycosylation site (N-linked (GlcNAc...) asparagine).

This sequence belongs to the NGF-beta family. As to quaternary structure, homodimer; non-covalently linked. Expressed by the venom gland.

Its subcellular location is the secreted. Functionally, nerve growth factor is important for the development and maintenance of the sympathetic and sensory nervous systems. It stimulates division and differentiation of sympathetic and embryonic sensory neurons as well as basal forebrain cholinergic neurons in the brain. Its relevance in the snake venom is not clear. However, it has been shown to inhibit metalloproteinase-dependent proteolysis of platelet glycoprotein Ib alpha, suggesting a metalloproteinase inhibition to prevent metalloprotease autodigestion and/or protection against prey proteases. Binds a lipid between the two protein chains in the homodimer. The lipid-bound form promotes histamine relase from mouse mast cells, contrary to the lipid-free form. The protein is Venom nerve growth factor 1 of Pseudonaja textilis (Eastern brown snake).